We begin with the raw amino-acid sequence, 193 residues long: Ion-translocating oxidoreductase complex subunit A (193 aa).

6 consecutive transmembrane segments (helical) span residues 4–24 (FLLV…KFLG), 39–59 (IGMG…CWLV), 71–91 (FLRI…IETV), 102–122 (ALGI…LPLM), 134–154 (TLSG…FAGM), and 171–191 (PIAF…AGLV).

Belongs to the NqrDE/RnfAE family. As to quaternary structure, the complex is composed of six subunits: RnfA, RnfB, RnfC, RnfD, RnfE and RnfG.

The protein localises to the cellular chromatophore membrane. Functionally, part of a membrane-bound complex that couples electron transfer with translocation of ions across the membrane. Required for nitrogen fixation. Involved in electron transfer to nitrogenase. The protein is Ion-translocating oxidoreductase complex subunit A of Rhodobacter capsulatus (Rhodopseudomonas capsulata).